We begin with the raw amino-acid sequence, 75 residues long: Large ribosomal subunit protein bL31 (75 aa).

Belongs to the bacterial ribosomal protein bL31 family. Type A subfamily. Part of the 50S ribosomal subunit.

Binds the 23S rRNA. This chain is Large ribosomal subunit protein bL31, found in Chlorobium phaeobacteroides (strain BS1).